The following is a 291-amino-acid chain: F-box protein PP2-A12 (291 aa).

The F-box domain occupies 25–71 (KPGLGDLPEACVAIIVENLDPVEICRFSKLNRAFRGASWADCVWESK).

The polypeptide is F-box protein PP2-A12 (P2A12) (Arabidopsis thaliana (Mouse-ear cress)).